Consider the following 179-residue polypeptide: Bifunctional protein PyrR (179 aa).

Positions 100–112 match the PRPP-binding motif; sequence VILVDDVLFTGRT.

It belongs to the purine/pyrimidine phosphoribosyltransferase family. PyrR subfamily.

It carries out the reaction UMP + diphosphate = 5-phospho-alpha-D-ribose 1-diphosphate + uracil. Functionally, regulates the transcription of the pyrimidine nucleotide (pyr) operon in response to exogenous pyrimidines. Its function is as follows. Also displays a weak uracil phosphoribosyltransferase activity which is not physiologically significant. The polypeptide is Bifunctional protein PyrR (Haemophilus influenzae (strain 86-028NP)).